Here is a 242-residue protein sequence, read N- to C-terminus: 1-(5-phosphoribosyl)-5-[(5-phosphoribosylamino)methylideneamino] imidazole-4-carboxamide isomerase (242 aa).

D8 serves as the catalytic Proton acceptor. Residue D129 is the Proton donor of the active site.

The protein belongs to the HisA/HisF family.

The protein localises to the cytoplasm. The enzyme catalyses 1-(5-phospho-beta-D-ribosyl)-5-[(5-phospho-beta-D-ribosylamino)methylideneamino]imidazole-4-carboxamide = 5-[(5-phospho-1-deoxy-D-ribulos-1-ylimino)methylamino]-1-(5-phospho-beta-D-ribosyl)imidazole-4-carboxamide. It participates in amino-acid biosynthesis; L-histidine biosynthesis; L-histidine from 5-phospho-alpha-D-ribose 1-diphosphate: step 4/9. The protein is 1-(5-phosphoribosyl)-5-[(5-phosphoribosylamino)methylideneamino] imidazole-4-carboxamide isomerase of Maridesulfovibrio salexigens (strain ATCC 14822 / DSM 2638 / NCIMB 8403 / VKM B-1763) (Desulfovibrio salexigens).